Consider the following 562-residue polypeptide: Nucleoprotein (562 aa).

The tract at residues 53–238 is binding site for the cap structure m7GTP; it reads MRRVKRDDSD…ITQEESQINI (186 aa). Residues D381 and E383 each coordinate Mn(2+). Residues E391, C498, H501, and C522 each coordinate Zn(2+). Residue D526 participates in Mn(2+) binding.

Belongs to the arenaviridae nucleocapsid protein family. In terms of assembly, homomultimerizes to form the nucleocapsid. Binds to viral genomic RNA. Interacts with glycoprotein G2. Interacts with protein Z; this interaction probably directs the encapsidated genome to budding sites. Interacts with protein L; this interaction does not interfere with Z-L interaction. Interacts with host IKBKE (via Protein kinase domain); the interaction inhibits IKBKE kinase activity.

Its subcellular location is the virion. It is found in the host cytoplasm. Functionally, encapsidates the genome, protecting it from nucleases. The encapsidated genomic RNA is termed the nucleocapsid (NC). Serves as template for viral transcription and replication. The increased presence of protein N in host cell does not seem to trigger the switch from transcription to replication as observed in other negative strain RNA viruses. Through the interaction with host IKBKE, strongly inhibits the phosphorylation and nuclear translocation of host IRF3, a protein involved in interferon activation pathway, leading to the inhibition of interferon-beta and IRF3-dependent promoters activation. Also encodes a functional 3'-5' exoribonuclease that degrades preferentially dsRNA substrates and thereby participates in the suppression of interferon induction. This Neotoma (wood rats) protein is Nucleoprotein.